Reading from the N-terminus, the 265-residue chain is Mlc titration factor A (265 aa).

Zn(2+) contacts are provided by His111, His148, His152, and Glu211.

This sequence belongs to the MtfA family. In terms of assembly, interacts with Mlc. It depends on Zn(2+) as a cofactor.

It localises to the cytoplasm. In terms of biological role, involved in the modulation of the activity of the glucose-phosphotransferase system (glucose-PTS). Interacts with the transcriptional repressor Mlc, preventing its interaction with DNA and leading to the modulation of expression of genes regulated by Mlc, including ptsG, which encodes the PTS system glucose-specific EIICB component. Shows zinc-dependent metallopeptidase activity. The polypeptide is Mlc titration factor A (Cronobacter sakazakii (strain ATCC BAA-894) (Enterobacter sakazakii)).